Consider the following 208-residue polypeptide: Holliday junction resolvase RecU (208 aa).

4 residues coordinate Mg(2+): Thr87, Asp89, Glu102, and Gln121.

Belongs to the RecU family. The cofactor is Mg(2+).

It localises to the cytoplasm. The enzyme catalyses Endonucleolytic cleavage at a junction such as a reciprocal single-stranded crossover between two homologous DNA duplexes (Holliday junction).. In terms of biological role, endonuclease that resolves Holliday junction intermediates in genetic recombination. Cleaves mobile four-strand junctions by introducing symmetrical nicks in paired strands. Promotes annealing of linear ssDNA with homologous dsDNA. Required for DNA repair, homologous recombination and chromosome segregation. This Staphylococcus aureus (strain MRSA252) protein is Holliday junction resolvase RecU.